The primary structure comprises 364 residues: Tyrosyl-DNA phosphodiesterase 2 (364 aa).

Met1 carries the N-acetylmethionine modification. Positions 1–10 are enriched in low complexity; the sequence is MERNSGPEAG. Residues 1 to 21 form a disordered region; the sequence is MERNSGPEAGPEAELEEGEPE. Lys23 is covalently cross-linked (Glycyl lysine isopeptide (Lys-Gly) (interchain with G-Cter in SUMO2)). The tract at residues 68 to 108 is disordered; sequence ESASESRPESLSEPGSCVDLTKEETNDSISSKTSTSEDKSV. Phosphothreonine; by ACVR1B occurs at positions 88 and 92. Ser95 carries the post-translational modification Phosphoserine. The segment at 122 to 126 is interaction with 5' end of substrate DNA; that stretch reads NIDGL. Positions 124 and 154 each coordinate Mg(2+). Positions 228 to 233 are interaction with 5' end of substrate DNA; it reads HLESTR. The active-site Proton donor/acceptor is the Asp264. Positions 266–268 are interaction with 5' end of substrate DNA; it reads NLR.

It belongs to the CCR4/nocturin family. Interacts with TRAF2, TRAF3, TRAF5, TRAF6, TNFRSF8/CD30, TNFRSF5/CD40, TNFRSF1B/TNF-R75, ETS1, ETS2, FLI1, SMAD3 and ACVR1B/ALK4. The cofactor is Mg(2+). Requires Mn(2+) as cofactor. Post-translationally, ubiquitinated by TRAF6.

The protein localises to the nucleus. Its subcellular location is the PML body. It is found in the nucleolus. It localises to the cytoplasm. Functionally, DNA repair enzyme that can remove a variety of covalent adducts from DNA through hydrolysis of a 5'-phosphodiester bond, giving rise to DNA with a free 5' phosphate. Catalyzes the hydrolysis of dead-end complexes between DNA and the topoisomerase 2 (TOP2) active site tyrosine residue. The 5'-tyrosyl DNA phosphodiesterase activity can enable the repair of TOP2-induced DNA double-strand breaks/DSBs without the need for nuclease activity, creating a 'clean' DSB with 5'-phosphate termini that are ready for ligation. Thereby, protects the transcription of many genes involved in neurological development and maintenance from the abortive activity of TOP2. Hydrolyzes 5'-phosphoglycolates on protruding 5' ends on DSBs due to DNA damage by radiation and free radicals. Has preference for single-stranded DNA or duplex DNA with a 4 base pair overhang as substrate. Also has 3'-tyrosyl DNA phosphodiesterase activity, but less efficiently and much slower than TDP1. Constitutes the major if not only 5'-tyrosyl-DNA phosphodiesterase in cells. Also acts as an adapter by participating in the specific activation of MAP3K7/TAK1 in response to TGF-beta: associates with components of the TGF-beta receptor-TRAF6-TAK1 signaling module and promotes their ubiquitination dependent complex formation. Involved in non-canonical TGF-beta induced signaling routes. May also act as a negative regulator of ETS1 and may inhibit NF-kappa-B activation. Acts as a regulator of ribosome biogenesis following stress. In Bos taurus (Bovine), this protein is Tyrosyl-DNA phosphodiesterase 2 (TDP2).